Consider the following 243-residue polypeptide: MTTSSEQPRTGYKRVMLKLGGEMFGGGKVGVDPDVVDNVARQIAEVAKTGAEIAVVIGGGNFFRGAELQQRGMDRARSDYMGMLGTVMNCLALQDFLGQHGVECRVQTAINMAQVAEPYLPLRAERHLEKGRVVIFGAGMGMPYFSTDTTAAQRALEIGCDVLLMAKAVDGVYSDDPRTNPDAELFTEITPKEVIEKGLKVADATAFSLCMDNKMPILVFNLLTEGNIARAISGERIGTLVES.

18–21 (KLGG) serves as a coordination point for ATP. UMP is bound at residue Gly-59. ATP contacts are provided by Gly-60 and Arg-64. Residues Asp-79 and 140–147 (MGMPYFST) contribute to the UMP site. ATP contacts are provided by Tyr-173 and Asp-176.

This sequence belongs to the UMP kinase family. Homohexamer.

It localises to the cytoplasm. It catalyses the reaction UMP + ATP = UDP + ADP. Its pathway is pyrimidine metabolism; CTP biosynthesis via de novo pathway; UDP from UMP (UMPK route): step 1/1. Its activity is regulated as follows. Inhibited by UTP. Its function is as follows. Catalyzes the reversible phosphorylation of UMP to UDP. This chain is Uridylate kinase, found in Corynebacterium glutamicum (strain R).